A 134-amino-acid chain; its full sequence is MDTSHAIKSCVLILLVTLLCAERAQGLECYQCYGVPFETSCPSFTCPYPDGFCVAQEEEFIANSQRKKVKSRSCHPFCPDEIEKKFILDPNTKMNISCCQEDLCNAAVPTGGSSWTTAGVLLFSLGSVLLQTLM.

A signal peptide spans 1–21; it reads MDTSHAIKSCVLILLVTLLCA. The region spanning 27-105 is the UPAR/Ly6 domain; it reads LECYQCYGVP…ISCCQEDLCN (79 aa). 5 disulfides stabilise this stretch: Cys-29-Cys-53, Cys-32-Cys-41, Cys-46-Cys-74, Cys-78-Cys-98, and Cys-99-Cys-104. N-linked (GlcNAc...) asparagine glycosylation is present at Asn-95. Gly-112 carries the GPI-anchor amidated glycine lipid modification. The propeptide at 113 to 134 is removed in mature form; that stretch reads SSWTTAGVLLFSLGSVLLQTLM.

In terms of tissue distribution, expressed in hematopoietic tissue (spleen, thymus, bone marrow). Also found in peritoneal macrophages, peripheral blood leukocytes, liver, heart, brain, kidney and lung.

Its subcellular location is the cell membrane. The polypeptide is Lymphocyte antigen 6I (Ly6i) (Mus musculus (Mouse)).